The primary structure comprises 354 residues: NADH-quinone oxidoreductase subunit H (354 aa).

A run of 8 helical transmembrane segments spans residues 22-42, 91-111, 124-144, 162-182, 203-223, 250-270, 291-311, and 326-346; these read ILIR…YLIL, YLVA…VIPF, LLYV…AGWA, VSYE…SGSL, LLSW…ISGV, GMTF…ISTM, IPGF…FIWI, and LGWK…AIWI.

Belongs to the complex I subunit 1 family. In terms of assembly, NDH-1 is composed of 14 different subunits. Subunits NuoA, H, J, K, L, M, N constitute the membrane sector of the complex.

It localises to the cell inner membrane. The enzyme catalyses a quinone + NADH + 5 H(+)(in) = a quinol + NAD(+) + 4 H(+)(out). Functionally, NDH-1 shuttles electrons from NADH, via FMN and iron-sulfur (Fe-S) centers, to quinones in the respiratory chain. The immediate electron acceptor for the enzyme in this species is believed to be ubiquinone. Couples the redox reaction to proton translocation (for every two electrons transferred, four hydrogen ions are translocated across the cytoplasmic membrane), and thus conserves the redox energy in a proton gradient. This subunit may bind ubiquinone. The chain is NADH-quinone oxidoreductase subunit H from Cupriavidus metallidurans (strain ATCC 43123 / DSM 2839 / NBRC 102507 / CH34) (Ralstonia metallidurans).